A 252-amino-acid polypeptide reads, in one-letter code: Short chain dehydrogenase andC (252 aa).

Positions 1 to 25 are cleaved as a signal peptide; sequence MGFLQDKVVIITGAAAGIGLATATA. 3 residues coordinate NADP(+): Ile11, Asp57, and Arg119. Ser137 functions as the Proton donor in the catalytic mechanism. The NADP(+) site is built by Tyr151 and Lys155. Tyr151 acts as the Proton acceptor in catalysis. Lys155 acts as the Lowers pKa of active site Tyr in catalysis.

This sequence belongs to the short-chain dehydrogenases/reductases (SDR) family.

Its pathway is secondary metabolite biosynthesis; terpenoid biosynthesis. Its function is as follows. Short chain dehydrogenase; part of the gene cluster that mediates the biosynthesis of anditomin, a fungal meroterpenoid. The first step of the pathway is the synthesis of 3,5-dimethylorsellinic acid (DMOA) by the polyketide synthase andM. DMOA is then converted to the phthalide compound 5,7-dihydroxy-4,6-dimethylphthalide (DHDMP) by the cytochrome P450 monooxygenase andK, which is further prenylated by the prenyltransferase andD to yield farnesyl-DHDMP. Further epoxidation by the FAD-dependent monooxygenase andE leads to epoxyfarnesyl-DHDMP. The next step involves the terpene cyclase andB that converts epoxyfarnesyl-DHDMP into preandiloid A through opening of the epoxide ring followed by the cyclization of the farnesyl moiety. Preandiloid A is in turn oxidized at the C-3 hydroxyl group to yield preandiloid B by the dehydrogenase andC. The dioxygenase andA is solely responsible for the dehydrogenation of preandiloid B leading to the enone preandiloid C, as well as for the intriguing structural rearrangement to generate the bicyclo[2.2.2]octane core, transforming preandiloid C into andiconin. FAD-binding monooxygenase andJ then produces andilesin D which is reduced by dehydrogenase andI to yield andilesin A. Action of acetyltransferase andG followed by a spontaneous acetate elimination leads then to andilesin B, which is in turn substrate of the short chain dehydrogenase andH to yield andilesin C. Finally, the dioxygenase andF catalyzes the transformation of andilesin C to anditomin. The polypeptide is Short chain dehydrogenase andC (Emericella variicolor (Aspergillus stellatus)).